The following is a 368-amino-acid chain: MLDWDSILAYNTIKVVRIRDRRLGILHLIFMIAIISYVVIYSAIIKKGYLSIEEPVGSIRTSLWSPNQFNGNESYCKNNAKPYPYEKLDCVYYDDALALYPIGDDVGFTASTRIEISDQKANCSLMNPSCKFKTFNYSNVYLADIESFTVLIDHTMYAPSSQIQFNGGDLSGYVLDQNGNEIQLNESVNVIGVEGKPDVLEISKLLEFAGVNLDDPSLTNSSNPIRYDGCVLFVFIEYSNTFSYDLNKIKYVYSIKLVDDTIYNIPEVVILDDVNSRLYYKRHAIRLIFIQTGVIGSFNFQSLLLTLVSGLGLLTVSTLIVDQLAIRFLPQRKSYSSLKFQTTESFKMKKKIVNDDGEDKLYHNIEAL.

At 1–24 (MLDWDSILAYNTIKVVRIRDRRLG) the chain is on the cytoplasmic side. A helical transmembrane segment spans residues 25-45 (ILHLIFMIAIISYVVIYSAII). The Lumenal segment spans residues 46-368 (KKGYLSIEEP…DKLYHNIEAL (323 aa)). The interval 282–295 (RHAIRLIFIQTGVI) is pore-forming motif.

Belongs to the P2X receptor family.

Its subcellular location is the contractile vacuole membrane. In terms of biological role, P2X receptors are ligand-gated ion channels that play a role in intracellular calcium signaling. ATP does not evoke inward currents in p2xC. Not essential for osmoregulation. In Dictyostelium discoideum (Social amoeba), this protein is P2X receptor C (p2xC).